The following is a 757-amino-acid chain: MDVNPTLLFLKVPAQNAISTTFPYTGDPPYSHGTGTGYTMDTVNRTHQYSEKGKWTTNTETGAPQLNPIDGPLPEDNEPSGYAQTDCVLEAMAFLEESHPGIFENSCLETMEVVQQTRVDKLTQGRQTYDWTLNRNQPAATALANTIEVFRSNGLTANESGRLIDFLKDVMESMDKEEMEITTHFQRKRRVRDNMTKKMVTQRTIGKKKQRLNKRSYLIRALTLNTMTKDAERGKLKRRAIATPGMQIRGFVYFVETLARSICEKLEQSGLPVGGNEKKAKLANVVRKMMTNSQDTELSFTITGDNTKWNENQNPRMFLAMITYITRNQPEWFRNVLSIAPIMFSNKMARLGKGYMFESKSMKLRTQIPAEMLADIDLKYFNESTRKKIEKIRPLLIDGTASLSPGMMMGMFNMLSTVLGVSILNLGQKRYTKTTYWWDGLQSSDDFALIVNAPNHEGIQAGVDRFYRTCKLVGINMSKKKSYINRTGTFEFTSFFYRYGFVANFSMELPSFGVSGINESADMSIGVTVIKNNMINNDLGPATAQMALQLFIKDYRYTYRCHRGDTQIQTRRSFELKKLWEQTRSKAGLLVSDGGPNLYNIRNLHIPEVCLKWELMDEDYQGRLCNPLNPFVSHKEIESVNNAVVMPAHGPAKSMEYDAVATTHSWIPKRNRSILNTSQRGILEDEQMYQKCCNLFEKFFPSSSYRRPVGISSMVEAMVSRARIDARIDFESGRIKKEEFAEIMKICSTIEELRRQK.

Residues 50 to 82 (SEKGKWTTNTETGAPQLNPIDGPLPEDNEPSGY) form a disordered region. Residues 55–64 (WTTNTETGAP) show a composition bias toward polar residues. 2 short sequence motifs (nuclear localization signal) span residues 187 to 195 (RKRRVRDNM) and 203 to 216 (RTIG…NKRS). The segment at 249 to 256 (RGFVYFVE) is promoter-binding site. Residues 286–483 (VRKMMTNSQD…GINMSKKKSY (198 aa)) form the RdRp catalytic domain.

It belongs to the influenza viruses polymerase PB1 family. In terms of assembly, influenza RNA polymerase is composed of three subunits: PB1, PB2 and PA. Interacts (via N-terminus) with PA (via C-terminus). Interacts (via C-terminus) with PB2 (via N-terminus); this interaction is essential for transcription initiation. Phosphorylated by host PRKCA.

The protein resides in the host nucleus. Its subcellular location is the host cytoplasm. The catalysed reaction is RNA(n) + a ribonucleoside 5'-triphosphate = RNA(n+1) + diphosphate. Its function is as follows. RNA-dependent RNA polymerase which is responsible for replication and transcription of virus RNA segments. The transcription of viral mRNAs occurs by a unique mechanism called cap-snatching. 5' methylated caps of cellular mRNAs are cleaved after 10-13 nucleotides by PA. In turn, these short capped RNAs are used as primers by PB1 for transcription of viral mRNAs. During virus replication, PB1 initiates RNA synthesis and copy vRNA into complementary RNA (cRNA) which in turn serves as a template for the production of more vRNAs. The protein is RNA-directed RNA polymerase catalytic subunit of Aves (Human).